We begin with the raw amino-acid sequence, 656 residues long: UvrABC system protein B (656 aa).

One can recognise a Helicase ATP-binding domain in the interval 23–180 (EGIKKGYRFQ…QHLAKIGYER (158 aa)). Position 36-43 (36-43 (GVTGSGKT)) interacts with ATP. A Beta-hairpin motif is present at residues 89-112 (YYDYYQPEAYVPTKDLYIEKNADI). The 163-residue stretch at 426–588 (QVDDLISEIK…ITPKTIVKPL (163 aa)) folds into the Helicase C-terminal domain. The UVR domain occupies 614-649 (EEYLSLLEEEMYRAASELRYEDAAKLRDEIFRLREE).

Belongs to the UvrB family. As to quaternary structure, forms a heterotetramer with UvrA during the search for lesions. Interacts with UvrC in an incision complex.

The protein localises to the cytoplasm. Its function is as follows. The UvrABC repair system catalyzes the recognition and processing of DNA lesions. A damage recognition complex composed of 2 UvrA and 2 UvrB subunits scans DNA for abnormalities. Upon binding of the UvrA(2)B(2) complex to a putative damaged site, the DNA wraps around one UvrB monomer. DNA wrap is dependent on ATP binding by UvrB and probably causes local melting of the DNA helix, facilitating insertion of UvrB beta-hairpin between the DNA strands. Then UvrB probes one DNA strand for the presence of a lesion. If a lesion is found the UvrA subunits dissociate and the UvrB-DNA preincision complex is formed. This complex is subsequently bound by UvrC and the second UvrB is released. If no lesion is found, the DNA wraps around the other UvrB subunit that will check the other stand for damage. The sequence is that of UvrABC system protein B from Pseudothermotoga lettingae (strain ATCC BAA-301 / DSM 14385 / NBRC 107922 / TMO) (Thermotoga lettingae).